Consider the following 736-residue polypeptide: DEAD-box ATP-dependent RNA helicase 21 (736 aa).

Residues 14–38 (LTREEREKLALERRQAAVTDQRRSA) adopt a coiled-coil conformation. Positions 25 to 38 (ERRQAAVTDQRRSA) are enriched in basic and acidic residues. Disordered regions lie at residues 25 to 178 (ERRQ…PKKR) and 231 to 263 (KVAA…DKKE). The span at 46–58 (PRPPPPPPPPLSN) shows a compositional bias: pro residues. Composition is skewed to basic and acidic residues over residues 64–166 (SSSH…DAIK) and 231–252 (KVAA…GLDD). A coiled-coil region spans residues 137–167 (DRDRERGDREKDRLEKMAEREREKELDAIKE). A Q motif motif is present at residues 315–343 (RKWSESKLGTELLRAVEKAGYKEPSPIQM). One can recognise a Helicase ATP-binding domain in the interval 346-541 (IPLGLQQRDV…RKYLRNPVVV (196 aa)). 359–366 (AETGSGKT) is a binding site for ATP. The DEAD box signature appears at 472-475 (DEAD). The region spanning 568 to 712 (RLQKILTDLG…PVPPELARHE (145 aa)) is the Helicase C-terminal domain. The interval 704–736 (VPPELARHEASKFKPGSVPDRPPRRNDTVYATH) is disordered.

The protein belongs to the DEAD box helicase family. DDX23/PRP28 subfamily.

The protein localises to the cytoplasm. Its subcellular location is the nucleus. The enzyme catalyses ATP + H2O = ADP + phosphate + H(+). In terms of biological role, ATP-dependent RNA helicase involved in mRNA splicing. May destabilize the U1/5'-splice site duplex to permit an effective competition for the 5'-splice site by the U6 snRNA, resulting in the switch between U1 and U6 at the 5'-splice site. May also act to unwind the U4/U6 base-pairing interaction in the U4/U6/U5 snRNP, facilitating the first covalent step of splicing. This chain is DEAD-box ATP-dependent RNA helicase 21, found in Oryza sativa subsp. japonica (Rice).